We begin with the raw amino-acid sequence, 495 residues long: Probable aspartic-type endopeptidase OPSB (495 aa).

A signal peptide spans 1–19 (MRGDSFIWSLATAIPLLST). One can recognise a Peptidase A1 domain in the interval 73-408 (YFCNLTLGTP…DLDNNEISIA (336 aa)). A glycan (N-linked (GlcNAc...) asparagine) is linked at N76. Residue D91 is part of the active site. N-linked (GlcNAc...) asparagine glycosylation is present at N136. D290 is an active-site residue. The N-linked (GlcNAc...) asparagine glycan is linked to N413. Residues 447–470 (ATGLPGVETGVPGSRPPSSKAAGQ) are disordered. A467 carries the GPI-anchor amidated alanine lipid modification. Positions 468-495 (AGQAKRPDFVLGVAAVGLAGAGMLFAAM) are cleaved as a propeptide — removed in mature form.

The protein belongs to the peptidase A1 family.

The protein resides in the cell membrane. In terms of biological role, probable GPI-anchored aspartic-type endopeptidase which contributes to virulence. The protein is Probable aspartic-type endopeptidase OPSB (OPSB) of Arthroderma benhamiae (strain ATCC MYA-4681 / CBS 112371) (Trichophyton mentagrophytes).